Reading from the N-terminus, the 307-residue chain is Serine/threonine-protein phosphatase 4 catalytic subunit (307 aa).

4 residues coordinate Mn(2+): aspartate 54, histidine 56, aspartate 82, and asparagine 114. Histidine 115 acts as the Proton donor in catalysis. Histidine 164 and histidine 238 together coordinate Mn(2+). A Leucine methyl ester modification is found at leucine 307.

Belongs to the PPP phosphatase family. PP-4 (PP-X) subfamily. As to quaternary structure, serine/threonine-protein phosphatase 4 (PP4) occurs in different assemblies of the catalytic and one or more regulatory subunits. The cofactor is Mn(2+).

The protein localises to the cytoplasm. Its subcellular location is the nucleus. The protein resides in the cytoskeleton. It localises to the microtubule organizing center. It is found in the centrosome. It catalyses the reaction O-phospho-L-seryl-[protein] + H2O = L-seryl-[protein] + phosphate. The enzyme catalyses O-phospho-L-threonyl-[protein] + H2O = L-threonyl-[protein] + phosphate. In terms of biological role, protein phosphatase that regulates many processes such as microtubule organization at centrosomes. This chain is Serine/threonine-protein phosphatase 4 catalytic subunit (ppp4c), found in Xenopus laevis (African clawed frog).